Here is a 739-residue protein sequence, read N- to C-terminus: Phosphoribosylformylglycinamidine synthase subunit PurL (739 aa).

H54 is a catalytic residue. Residues Y57 and K96 each contribute to the ATP site. E98 is a Mg(2+) binding site. Substrate contacts are provided by residues 99–102 and R121; that span reads SHNH. H100 serves as the catalytic Proton acceptor. D122 contributes to the Mg(2+) binding site. Position 245 (Q245) interacts with substrate. D273 lines the Mg(2+) pocket. 317 to 319 is a binding site for substrate; the sequence is ESQ. Positions 500 and 537 each coordinate ATP. N538 contacts Mg(2+). S540 lines the substrate pocket.

The protein belongs to the FGAMS family. In terms of assembly, monomer. Part of the FGAM synthase complex composed of 1 PurL, 1 PurQ and 2 PurS subunits.

It localises to the cytoplasm. It catalyses the reaction N(2)-formyl-N(1)-(5-phospho-beta-D-ribosyl)glycinamide + L-glutamine + ATP + H2O = 2-formamido-N(1)-(5-O-phospho-beta-D-ribosyl)acetamidine + L-glutamate + ADP + phosphate + H(+). Its pathway is purine metabolism; IMP biosynthesis via de novo pathway; 5-amino-1-(5-phospho-D-ribosyl)imidazole from N(2)-formyl-N(1)-(5-phospho-D-ribosyl)glycinamide: step 1/2. Its function is as follows. Part of the phosphoribosylformylglycinamidine synthase complex involved in the purines biosynthetic pathway. Catalyzes the ATP-dependent conversion of formylglycinamide ribonucleotide (FGAR) and glutamine to yield formylglycinamidine ribonucleotide (FGAM) and glutamate. The FGAM synthase complex is composed of three subunits. PurQ produces an ammonia molecule by converting glutamine to glutamate. PurL transfers the ammonia molecule to FGAR to form FGAM in an ATP-dependent manner. PurS interacts with PurQ and PurL and is thought to assist in the transfer of the ammonia molecule from PurQ to PurL. The polypeptide is Phosphoribosylformylglycinamidine synthase subunit PurL (Bacillus cereus (strain AH187)).